Here is a 177-residue protein sequence, read N- to C-terminus: Interleukin-1 receptor antagonist protein (177 aa).

The N-terminal stretch at 1-25 is a signal peptide; the sequence is MEVSRYLCSYLISFLLFLFHSETAC. A disulfide bridge links Cys91 with Cys141. N-linked (GlcNAc...) asparagine glycosylation is present at Asn109.

The protein belongs to the IL-1 family.

Its subcellular location is the secreted. In terms of biological role, anti-inflammatory antagonist of interleukin-1 family of proinflammatory cytokines such as interleukin-1beta/IL1B and interleukin-1alpha/IL1A. Protects from immune dysregulation and uncontrolled systemic inflammation triggered by IL1 for a range of innate stimulatory agents such as pathogens. This is Interleukin-1 receptor antagonist protein (IL1RN) from Sus scrofa (Pig).